The sequence spans 860 residues: Leucine--tRNA ligase (860 aa).

The 'HIGH' region motif lies at 42-52; that stretch reads PYPSGRLHMGH. Positions 619-623 match the 'KMSKS' region motif; the sequence is KMSKS. Lys-622 is an ATP binding site.

This sequence belongs to the class-I aminoacyl-tRNA synthetase family.

It localises to the cytoplasm. It carries out the reaction tRNA(Leu) + L-leucine + ATP = L-leucyl-tRNA(Leu) + AMP + diphosphate. The polypeptide is Leucine--tRNA ligase (Salmonella paratyphi A (strain ATCC 9150 / SARB42)).